The primary structure comprises 1113 residues: MSQTLLDNLNKKELTETSCTIEIQAAFILSSLATFFGGLIVLFIFRIALKISRNWKTVKGPRGILELFSSRRIEVNPLRKLYFHGVFRERIEMLLSAQTIVGQVLVILVFVLSIGSLVIYFINSMDPVRKCSSYEDKIVHVDLSFNAFFSFYFGLRFWAAEDKIKFWLEMNSIVDIFTIPPTFISYYLKSNWLGLRFLRALRLLELPKILQILQVIKTSNSVKLSKLMSIVISTWFTAAGFLHLVENSGDPWLNGRNSQTMSYFESIYLVTATMSTVGFGDVVAKTSLGRIFIVFFTLGSLILFANYIPEMVELFSTRKKYNKPYEAVKGKKFIVVCGNITIDSVTAFLRNFLHRKAGEINIEIVFLGEAPPSVELETLLKCHTSCTTFVCGTALKFEDLKRVAVENAEACLILANPFCSDLHDEDNSNIMRVLSIKNYYPQTRVIIQMLQSQNKVFLSRIPNWNWSAGDNIICFAELKLGFIAQGCLVPGLCTFLTTLFIEQNQKVFPKHPWQKHFLNGLKNKILTQRLSNDFVGMTFPQVSRLCFLKMHLMLIAIQHKPLFHNCCSLILNPSSQVRLNKDTLGFFIAESSKDVKRALFYCSNCHSDVCNPELIGKCGCKNRSRQQLVAPTIMVMQSSLNEFAPTAEIYTSISREQTSSVTILTTRNMPVDTADDSDMLDSSGMFHWCRSMPLDKVVLKRSDKATHEFQNHIVACVFGDAHSSLMGLRNFVMPLRASNYTRQELKDIVFIGSLEYFQREWRFLRNFPKIHIMPGSALYTGDLHAVNVEQCSMCVILATPYKALSSQLLVDTETIMATLNIQALRISCPMSGSSKKEVNTSPTFSKYEGKQRYQQIPILTELKNPSNIHFIEQMDGLDEAIKGTSLHLSTAFSTGTVFSGTFLDSLLATAFYNYHVLELLQMLVTGGINSQTEHCLVKEKLYEGNEGGATFLSGRTRCKLGLLSLDETILSDIKPKKTFGQLFCGSLDNLGILCVGLYRMMDEGEHNSERKRFVITRPANECHLLPSDLVFCAIPFSITCDKSESNASIQDQDTTTNVTSMSQGSNFQGAQSALNEHSLSPASAMGEKKSPQLLNSRVYPLNLFDASDIDPGK.

Over 1–24 (MSQTLLDNLNKKELTETSCTIEIQ) the chain is Extracellular. The helical transmembrane segment at 25-45 (AAFILSSLATFFGGLIVLFIF) threads the bilayer. Over 46-101 (RIALKISRNWKTVKGPRGILELFSSRRIEVNPLRKLYFHGVFRERIEMLLSAQTIV) the chain is Cytoplasmic. The helical transmembrane segment at 102–122 (GQVLVILVFVLSIGSLVIYFI) threads the bilayer. Topologically, residues 123-137 (NSMDPVRKCSSYEDK) are extracellular. A helical membrane pass occupies residues 138–158 (IVHVDLSFNAFFSFYFGLRFW). Topologically, residues 159 to 165 (AAEDKIK) are cytoplasmic. The helical transmembrane segment at 166 to 186 (FWLEMNSIVDIFTIPPTFISY) threads the bilayer. The Extracellular portion of the chain corresponds to 187–188 (YL). The helical; Voltage-sensor transmembrane segment at 189–209 (KSNWLGLRFLRALRLLELPKI) threads the bilayer. Residues 210 to 226 (LQILQVIKTSNSVKLSK) are Cytoplasmic-facing. Residues 227-247 (LMSIVISTWFTAAGFLHLVEN) form a helical membrane-spanning segment. The Extracellular segment spans residues 248-259 (SGDPWLNGRNSQ). The pore-forming intramembrane region spans 260–282 (TMSYFESIYLVTATMSTVGFGDV). Residues 283 to 290 (VAKTSLGR) lie on the Extracellular side of the membrane. Residues 291-311 (IFIVFFTLGSLILFANYIPEM) traverse the membrane as a helical segment. At 312-1113 (VELFSTRKKY…FDASDIDPGK (802 aa)) the chain is on the cytoplasmic side. RCK N-terminal domains are found at residues 331-473 (KKFI…DNII) and 710-881 (QNHI…DEAI). The segment covering 1047–1081 (ASIQDQDTTTNVTSMSQGSNFQGAQSALNEHSLSP) has biased composition (polar residues). Residues 1047-1091 (ASIQDQDTTTNVTSMSQGSNFQGAQSALNEHSLSPASAMGEKKSP) form a disordered region.

Belongs to the potassium channel family. Calcium-activated (TC 1.A.1.3) subfamily. KCa1.1/KCNMA1 sub-subfamily. Homotetramer; which constitutes the activated potassium channel. Interacts with LRRC52; this interaction changes channel gating properties, such as shifting gating to more negative potentials at a given pH.

The protein resides in the cell membrane. The protein localises to the cell projection. Its subcellular location is the cilium. It is found in the flagellum membrane. The catalysed reaction is K(+)(in) = K(+)(out). Regulated by changes in cytosolic pH; activated by alkalization. Not activated by intracellular Ca(2+). VU0546110 acts as a selective inhibitor. The auxiliary subunit LRRC52 shifts the activation of KCNU1 to more negative potentials at a given pH. Testis-specific potassium channel activated by both intracellular pH and membrane voltage that mediates export of K(+). Represents the primary spermatozoan K(+) current. The channel underlies a pH-triggered membrane hyperpolarization during the process of sperm capacitation, as sperm encounter the alkaline environment near the ovum in the female reproductive tract, thereby playing an essential for male fertility. The protein is Potassium channel subfamily U member 1 (Kcnu1) of Rattus norvegicus (Rat).